A 245-amino-acid polypeptide reads, in one-letter code: Large ribosomal subunit protein uL4 (245 aa).

Over residues methionine 1–alanine 13 the composition is skewed to polar residues. Disordered regions lie at residues methionine 1 to serine 28, alanine 56 to proline 114, and threonine 224 to lysine 245. Positions glycine 59–glycine 71 are enriched in basic and acidic residues. Residues glycine 72–glycine 83 show a composition bias toward basic residues.

Belongs to the universal ribosomal protein uL4 family. In terms of assembly, part of the 50S ribosomal subunit.

In terms of biological role, one of the primary rRNA binding proteins, this protein initially binds near the 5'-end of the 23S rRNA. It is important during the early stages of 50S assembly. It makes multiple contacts with different domains of the 23S rRNA in the assembled 50S subunit and ribosome. Its function is as follows. Forms part of the polypeptide exit tunnel. In Frankia casuarinae (strain DSM 45818 / CECT 9043 / HFP020203 / CcI3), this protein is Large ribosomal subunit protein uL4.